Here is a 338-residue protein sequence, read N- to C-terminus: uncharacterized protein (338 aa).

The next 3 membrane-spanning stretches (helical) occupy residues 11–31, 249–269, and 318–338; these read ILSLLLSIIMGVAVMGSTFAI, IAVFVSATSMTQAGGTGIIPA, and VPTPLPSGCYGGSITFYGLGL.

Its subcellular location is the cell membrane. This is an uncharacterized protein from Methanocaldococcus jannaschii (strain ATCC 43067 / DSM 2661 / JAL-1 / JCM 10045 / NBRC 100440) (Methanococcus jannaschii).